Reading from the N-terminus, the 72-residue chain is Translation initiation factor IF-1 (72 aa).

The 72-residue stretch at 1 to 72 (MAKEDTIQMQ…TRARIVFRAR (72 aa)) folds into the S1-like domain.

This sequence belongs to the IF-1 family. Component of the 30S ribosomal translation pre-initiation complex which assembles on the 30S ribosome in the order IF-2 and IF-3, IF-1 and N-formylmethionyl-tRNA(fMet); mRNA recruitment can occur at any time during PIC assembly.

It is found in the cytoplasm. Functionally, one of the essential components for the initiation of protein synthesis. Stabilizes the binding of IF-2 and IF-3 on the 30S subunit to which N-formylmethionyl-tRNA(fMet) subsequently binds. Helps modulate mRNA selection, yielding the 30S pre-initiation complex (PIC). Upon addition of the 50S ribosomal subunit IF-1, IF-2 and IF-3 are released leaving the mature 70S translation initiation complex. This chain is Translation initiation factor IF-1, found in Neisseria gonorrhoeae (strain ATCC 700825 / FA 1090).